Consider the following 288-residue polypeptide: Energy-coupling factor transporter ATP-binding protein EcfA2 (288 aa).

The 243-residue stretch at 2-244 folds into the ABC transporter domain; that stretch reads IKFEKVNYTY…VDFLKAHELG (243 aa). Residue 39 to 46 coordinates ATP; sequence GHTGSGKS. The active-site Proton acceptor is the Glu170.

Belongs to the ABC transporter superfamily. Energy-coupling factor EcfA family. In terms of assembly, forms a stable energy-coupling factor (ECF) transporter complex composed of 2 membrane-embedded substrate-binding proteins (S component), 2 ATP-binding proteins (A component) and 2 transmembrane proteins (T component). In L.lactis forms a stable complex with EcfA' and EcfT and substrate-binding components. In E.coli forms a stable complex with EcfA, EcfT and individually with 3 tested substrate-binding components (BioY, NiaX and ThiT) with a stoichiometry of 1.1:1:1. The core ECF complex interacts with a number of substrate-specific binding components, including BioY, BioY2, HmpT, NiaX, PanT, QueT, RibU and ThiT.

The protein localises to the cell membrane. ATP-binding (A) component of a common energy-coupling factor (ECF) ABC-transporter complex. Unlike classic ABC transporters this ECF transporter provides the energy necessary to transport a number of different substrates. In this organism these probably include biotin, thiamine precursor, niacin, pantothenic acid, queuosine precursor, riboflavin and thiamine. Uptake of niacin or riboflavin into proteosomes containing EcfA1A2T and Niax or RibU has been demonstrated. Uptake requires hydrolyzable Mg-ATP and is substrate-specific; NiaX-containing proteosomes did not transport riboflavin. This chain is Energy-coupling factor transporter ATP-binding protein EcfA2, found in Lactococcus lactis subsp. cremoris (strain MG1363).